Here is a 303-residue protein sequence, read N- to C-terminus: Acetylglutamate kinase (303 aa).

Substrate is bound by residues 69–70 (GG), Arg91, and Asn201.

It belongs to the acetylglutamate kinase family. ArgB subfamily.

The protein localises to the cytoplasm. The catalysed reaction is N-acetyl-L-glutamate + ATP = N-acetyl-L-glutamyl 5-phosphate + ADP. It functions in the pathway amino-acid biosynthesis; L-arginine biosynthesis; N(2)-acetyl-L-ornithine from L-glutamate: step 2/4. In terms of biological role, catalyzes the ATP-dependent phosphorylation of N-acetyl-L-glutamate. This Novosphingobium aromaticivorans (strain ATCC 700278 / DSM 12444 / CCUG 56034 / CIP 105152 / NBRC 16084 / F199) protein is Acetylglutamate kinase.